The following is an 802-amino-acid chain: Oligophrenin-1 (802 aa).

One can recognise a PH domain in the interval 265 to 368; sequence QPTIEGYLYT…WMEAMDGKEP (104 aa). Residues 380–564 form the Rho-GAP domain; that stretch reads MELNEVGFKF…ILIEHFGKIY (185 aa). Disordered stretches follow at residues 569 to 589, 607 to 770, and 783 to 802; these read EESAAPPVPPPRVTARRHKPI, LDES…NAGE, and FETASRKTGSSQGRLPGDES. Positions 616-627 are enriched in polar residues; that stretch reads HQTPNGTITSSI. The span at 716–732 shows a compositional bias: basic and acidic residues; it reads HHKEGDADSFSKVRPPG.

Interacts with HOMER1. Interacts with AMPA receptor complexes. Interacts with SH3GL2 (endophilin-A1). Interacts (via C-terminus) with NR1D1.

It localises to the postsynapse. The protein localises to the presynapse. Its subcellular location is the cell projection. It is found in the axon. The protein resides in the dendritic spine. It localises to the dendrite. The protein localises to the cytoplasm. Stimulates GTP hydrolysis of members of the Rho family. Its action on RHOA activity and signaling is implicated in growth and stabilization of dendritic spines, and therefore in synaptic function. Critical for the stabilization of AMPA receptors at postsynaptic sites. Critical for the regulation of synaptic vesicle endocytosis at pre-synaptic terminals. Required for the localization of NR1D1 to dendrites, can suppress its repressor activity and protect it from proteasomal degradation. In Pan troglodytes (Chimpanzee), this protein is Oligophrenin-1 (OPHN1).